A 359-amino-acid polypeptide reads, in one-letter code: Patr class I histocompatibility antigen, B-1 alpha chain (359 aa).

The first 20 residues, 1-20 (APRTVLLLLSAALALTETWA), serve as a signal peptide directing secretion. Positions 21 to 110 (GSHSMRYFYT…ALRYYNQSEA (90 aa)) are alpha-1. The Extracellular segment spans residues 21–305 (GSHSMRYFYT…PSSQSTIPIV (285 aa)). N-linked (GlcNAc...) asparagine glycosylation is present at asparagine 106. Positions 111-202 (GSHTWQTMYG…ENGKETLQRA (92 aa)) are alpha-2. Cystine bridges form between cysteine 121-cysteine 184 and cysteine 223-cysteine 279. The segment at 203–294 (DPPKTHVTHH…GLPKPLTLRW (92 aa)) is alpha-3. Positions 205 to 291 (PKTHVTHHPI…QHEGLPKPLT (87 aa)) constitute an Ig-like C1-type domain. The tract at residues 295 to 305 (EPSSQSTIPIV) is connecting peptide. A helical transmembrane segment spans residues 306–329 (GIVAGLAVLVVTVAVVAVVAAVMC). Topologically, residues 330 to 359 (RRKSSGGKGGSYSQAASSDSAQGSDVSLTA) are cytoplasmic. Positions 332-359 (KSSGGKGGSYSQAASSDSAQGSDVSLTA) are disordered. Residues 340–359 (SYSQAASSDSAQGSDVSLTA) show a composition bias toward low complexity. 2 positions are modified to phosphoserine: serine 353 and serine 356.

It belongs to the MHC class I family. In terms of assembly, heterodimer of an alpha chain and a beta chain (beta-2-microglobulin).

It is found in the membrane. Functionally, involved in the presentation of foreign antigens to the immune system. The protein is Patr class I histocompatibility antigen, B-1 alpha chain of Pan troglodytes (Chimpanzee).